Consider the following 226-residue polypeptide: 1-hydroxy-2-glutathionyl-2-methyl-3-butene dehydrogenase (226 aa).

Belongs to the short-chain dehydrogenases/reductases (SDR) family.

The catalysed reaction is 2-glutathionyl-2-methylbut-3-en-1-ol + 2 NAD(+) + H2O = 2-glutathionyl-2-methylbut-3-enoate + 2 NADH + 3 H(+). It carries out the reaction 2-glutathionyl-2-methylbut-3-en-1-ol + NAD(+) = 2-glutathionyl-2-methylbut-3-enal + NADH + H(+). The enzyme catalyses 2-glutathionyl-2-methylbut-3-enal + NAD(+) + H2O = 2-glutathionyl-2-methylbut-3-enoate + NADH + 2 H(+). In terms of biological role, involved in isoprene degradation. Catalyzes the two-step NAD(+)-dependent oxidation of 2-glutathionyl-2-methylbut-3-en-1-ol (HGMB) to 2-glutathionyl-2-methylbut-3-enoate (GMBA). The sequence is that of 1-hydroxy-2-glutathionyl-2-methyl-3-butene dehydrogenase from Rhodococcus sp. (strain AD45).